We begin with the raw amino-acid sequence, 576 residues long: Beta-bisabolene synthase (576 aa).

5 residues coordinate (2E,6E)-farnesyl diphosphate: arginine 286, aspartate 323, aspartate 327, arginine 466, and asparagine 469. Residues aspartate 323 and aspartate 327 each coordinate Mg(2+). A DDXXD motif motif is present at residues 323 to 327; it reads DDVYD. Mg(2+) contacts are provided by asparagine 469, threonine 473, and glutamate 477.

The protein belongs to the terpene synthase family. Tpsb subfamily. It depends on Mg(2+) as a cofactor. Requires Mn(2+) as cofactor.

In terms of biological role, produces almost exclusively beta-bisabolene and only traces of alpha-bisabolol from (2E,6E)-farnesyl diphosphate in fragrance biosynthesis. The chain is Beta-bisabolene synthase from Santalum austrocaledonicum (Sandalwood).